Here is a 226-residue protein sequence, read N- to C-terminus: Ribose-5-phosphate isomerase A (226 aa).

Substrate contacts are provided by residues 26-29, 82-85, and 95-98; these read TGST, DGAD, and KGGG. Glutamate 104 functions as the Proton acceptor in the catalytic mechanism. Residue lysine 122 participates in substrate binding.

This sequence belongs to the ribose 5-phosphate isomerase family. As to quaternary structure, homodimer.

It carries out the reaction aldehydo-D-ribose 5-phosphate = D-ribulose 5-phosphate. It participates in carbohydrate degradation; pentose phosphate pathway; D-ribose 5-phosphate from D-ribulose 5-phosphate (non-oxidative stage): step 1/1. Functionally, catalyzes the reversible conversion of ribose-5-phosphate to ribulose 5-phosphate. This is Ribose-5-phosphate isomerase A from Streptococcus uberis (strain ATCC BAA-854 / 0140J).